A 138-amino-acid polypeptide reads, in one-letter code: Small ribosomal subunit protein uS11 (138 aa).

Over residues Met-1–Lys-12 the composition is skewed to low complexity. Residues Met-1–Lys-23 are disordered. Residues Lys-13–Lys-22 show a composition bias toward basic residues.

This sequence belongs to the universal ribosomal protein uS11 family. As to quaternary structure, part of the 30S ribosomal subunit. Interacts with proteins S7 and S18. Binds to IF-3.

Located on the platform of the 30S subunit, it bridges several disparate RNA helices of the 16S rRNA. Forms part of the Shine-Dalgarno cleft in the 70S ribosome. In Mycobacterium leprae (strain Br4923), this protein is Small ribosomal subunit protein uS11.